The chain runs to 503 residues: Maturase K (503 aa).

This sequence belongs to the intron maturase 2 family. MatK subfamily.

It is found in the plastid. Its subcellular location is the chloroplast. Its function is as follows. Usually encoded in the trnK tRNA gene intron. Probably assists in splicing its own and other chloroplast group II introns. This chain is Maturase K, found in Silene latifolia (White campion).